A 392-amino-acid chain; its full sequence is ATP phosphoribosyltransferase regulatory subunit (392 aa).

The protein belongs to the class-II aminoacyl-tRNA synthetase family. HisZ subfamily. Heteromultimer composed of HisG and HisZ subunits.

It is found in the cytoplasm. Its pathway is amino-acid biosynthesis; L-histidine biosynthesis; L-histidine from 5-phospho-alpha-D-ribose 1-diphosphate: step 1/9. Its function is as follows. Required for the first step of histidine biosynthesis. May allow the feedback regulation of ATP phosphoribosyltransferase activity by histidine. The polypeptide is ATP phosphoribosyltransferase regulatory subunit (Prochlorococcus marinus (strain MIT 9313)).